A 218-amino-acid chain; its full sequence is Peptidyl-prolyl cis-trans isomerase FKBP7 (218 aa).

The first 19 residues, 1–19 (MNLLFRLAVFLSLWCCSDA), serve as a signal peptide directing secretion. 2 N-linked (GlcNAc...) asparagine glycosylation sites follow: asparagine 41 and asparagine 128. Residues 49–141 (GDLLNAHYDG…MFEIELYAVT (93 aa)) form the PPIase FKBP-type domain. EF-hand domains lie at 141–176 (TKGPRSIETFKQIDTDNDRQLSKAEIELYLQKDFEK) and 185–218 (YQKAVLEDIFKKNDHNGDGFISPKEYNVHQHDEL). Aspartate 154, aspartate 156, aspartate 158, glutamine 160, glutamate 165, aspartate 198, asparagine 200, aspartate 202, and glutamate 209 together coordinate Ca(2+). The interval 197–218 (NDHNGDGFISPKEYNVHQHDEL) is disordered. Positions 215–218 (HDEL) match the Prevents secretion from ER motif.

Glycosylated. As to expression, expressed at highest levels in heart, lung and testis. Weakly expressed in kidney and lymph node. Little or no expression detected in brain, thymus, spleen and liver.

It localises to the endoplasmic reticulum lumen. The enzyme catalyses [protein]-peptidylproline (omega=180) = [protein]-peptidylproline (omega=0). In terms of biological role, PPIases accelerate the folding of proteins during protein synthesis. The sequence is that of Peptidyl-prolyl cis-trans isomerase FKBP7 (Fkbp7) from Mus musculus (Mouse).